A 422-amino-acid polypeptide reads, in one-letter code: UDP-N-acetylglucosamine 1-carboxyvinyltransferase (422 aa).

22-23 serves as a coordination point for phosphoenolpyruvate; that stretch reads KN. Arg93 is a binding site for UDP-N-acetyl-alpha-D-glucosamine. Cys117 functions as the Proton donor in the catalytic mechanism. At Cys117 the chain carries 2-(S-cysteinyl)pyruvic acid O-phosphothioketal. Residues 122–126, Asp308, and Leu330 each bind UDP-N-acetyl-alpha-D-glucosamine; that span reads RPVDL.

Belongs to the EPSP synthase family. MurA subfamily.

The protein resides in the cytoplasm. It carries out the reaction phosphoenolpyruvate + UDP-N-acetyl-alpha-D-glucosamine = UDP-N-acetyl-3-O-(1-carboxyvinyl)-alpha-D-glucosamine + phosphate. The protein operates within cell wall biogenesis; peptidoglycan biosynthesis. In terms of biological role, cell wall formation. Adds enolpyruvyl to UDP-N-acetylglucosamine. This chain is UDP-N-acetylglucosamine 1-carboxyvinyltransferase, found in Helicobacter pylori (strain P12).